A 94-amino-acid chain; its full sequence is Small ribosomal subunit protein bS20 (94 aa).

This sequence belongs to the bacterial ribosomal protein bS20 family.

Its function is as follows. Binds directly to 16S ribosomal RNA. The sequence is that of Small ribosomal subunit protein bS20 from Aquifex aeolicus (strain VF5).